Reading from the N-terminus, the 42-residue chain is MDFDTIMEKAYEEYFEGLAEGEEALSFSEFKQALSSSAKSNG.

Its subcellular location is the cytoplasm. This is an uncharacterized protein from Escherichia coli (strain K12).